Here is a 160-residue protein sequence, read N- to C-terminus: Fimbrial protein (160 aa).

Residues 1-7 (MKSLQKG) constitute a propeptide, leader sequence. Residue F8 is modified to N-methylphenylalanine. Residues 8–28 (FTLIELMIVVAIIGILAAFAI) form a helical membrane-spanning segment.

It belongs to the N-Me-Phe pilin family. The pili are polar flexible filaments of about 5.4 nanometers diameter and 2.5 micrometers average length; they consist of only a single polypeptide chain arranged in a helical configuration of five subunits per turn in the assembled pilus.

It is found in the fimbrium. The protein resides in the membrane. This chain is Fimbrial protein (fimA), found in Dichelobacter nodosus (Bacteroides nodosus).